The following is a 441-amino-acid chain: Xaa-Pro aminopeptidase (441 aa).

Mn(2+) is bound by residues Asp261, Asp272, His355, Glu384, and Glu407.

The protein belongs to the peptidase M24B family. As to quaternary structure, homotetramer. The cofactor is Mn(2+).

The protein localises to the cytoplasm. It carries out the reaction Release of any N-terminal amino acid, including proline, that is linked to proline, even from a dipeptide or tripeptide.. In Escherichia coli (strain K12), this protein is Xaa-Pro aminopeptidase (pepP).